A 499-amino-acid polypeptide reads, in one-letter code: ATP synthase subunit beta, chloroplastic (499 aa).

Glycine 170 to threonine 177 contributes to the ATP binding site.

This sequence belongs to the ATPase alpha/beta chains family. In terms of assembly, F-type ATPases have 2 components, CF(1) - the catalytic core - and CF(0) - the membrane proton channel. CF(1) has five subunits: alpha(3), beta(3), gamma(1), delta(1), epsilon(1). CF(0) has four main subunits: a(1), b(1), b'(1) and c(9-12).

The protein resides in the plastid. It is found in the chloroplast thylakoid membrane. It carries out the reaction ATP + H2O + 4 H(+)(in) = ADP + phosphate + 5 H(+)(out). Functionally, produces ATP from ADP in the presence of a proton gradient across the membrane. The catalytic sites are hosted primarily by the beta subunits. In Ipomoea purpurea (Common morning glory), this protein is ATP synthase subunit beta, chloroplastic.